The sequence spans 595 residues: Proline--tRNA ligase (595 aa).

The protein belongs to the class-II aminoacyl-tRNA synthetase family. ProS type 1 subfamily. Homodimer.

It localises to the cytoplasm. It catalyses the reaction tRNA(Pro) + L-proline + ATP = L-prolyl-tRNA(Pro) + AMP + diphosphate. In terms of biological role, catalyzes the attachment of proline to tRNA(Pro) in a two-step reaction: proline is first activated by ATP to form Pro-AMP and then transferred to the acceptor end of tRNA(Pro). As ProRS can inadvertently accommodate and process non-cognate amino acids such as alanine and cysteine, to avoid such errors it has two additional distinct editing activities against alanine. One activity is designated as 'pretransfer' editing and involves the tRNA(Pro)-independent hydrolysis of activated Ala-AMP. The other activity is designated 'posttransfer' editing and involves deacylation of mischarged Ala-tRNA(Pro). The misacylated Cys-tRNA(Pro) is not edited by ProRS. The protein is Proline--tRNA ligase of Treponema denticola (strain ATCC 35405 / DSM 14222 / CIP 103919 / JCM 8153 / KCTC 15104).